A 177-amino-acid chain; its full sequence is dCTP deaminase (177 aa).

DCTP contacts are provided by residues 100–105 and Asp-116; that span reads RSSIAR. Glu-126 functions as the Proton donor/acceptor in the catalytic mechanism. Residues Tyr-159 and Gln-166 each coordinate dCTP.

The protein belongs to the dCTP deaminase family. As to quaternary structure, homotrimer.

It catalyses the reaction dCTP + H2O + H(+) = dUTP + NH4(+). The protein operates within pyrimidine metabolism; dUMP biosynthesis; dUMP from dCTP (dUTP route): step 1/2. In terms of biological role, catalyzes the deamination of dCTP to dUTP. The polypeptide is dCTP deaminase (Korarchaeum cryptofilum (strain OPF8)).